Here is a 418-residue protein sequence, read N- to C-terminus: L-rhamnose isomerase (418 aa).

H262, D294, and D296 together coordinate Mn(2+).

It belongs to the rhamnose isomerase family. In terms of assembly, homotetramer. Mn(2+) serves as cofactor.

The protein localises to the cytoplasm. The catalysed reaction is L-rhamnopyranose = L-rhamnulose. It functions in the pathway carbohydrate degradation; L-rhamnose degradation; glycerone phosphate from L-rhamnose: step 1/3. Catalyzes the interconversion of L-rhamnose and L-rhamnulose. The sequence is that of L-rhamnose isomerase from Yersinia pestis bv. Antiqua (strain Antiqua).